Here is a 632-residue protein sequence, read N- to C-terminus: Golgin subfamily A member 8O (632 aa).

Residues 1–76 (MAEETQHNKL…TSSATLKDLE (76 aa)) form a disordered region. The span at 38–50 (TNGSIPETATSGG) shows a compositional bias: polar residues. 2 coiled-coil regions span residues 85-150 (VLDS…TDLY) and 209-421 (ELEQ…SLMA). Disordered regions lie at residues 423–452 (PGEGHGGEHLDSEGEEAPRPMPSVPEDPES), 505–524 (DAALGGGHHQAGAQGGDEGE), and 552–612 (NSAD…EHPG). The span at 427 to 440 (HGGEHLDSEGEEAP) shows a compositional bias: basic and acidic residues. Residues 508–520 (LGGGHHQAGAQGG) show a composition bias toward gly residues. Residues 569–578 (AADKHGDLRE) show a composition bias toward basic and acidic residues.

The protein belongs to the GOLGA6 family.

This Homo sapiens (Human) protein is Golgin subfamily A member 8O (GOLGA8O).